The following is a 259-amino-acid chain: Type III pantothenate kinase (259 aa).

Asp-6–Val-13 is an ATP binding site. Gly-107–Arg-110 lines the substrate pocket. The active-site Proton acceptor is Asp-109. Asp-129 is a K(+) binding site. Thr-132 is an ATP binding site. Thr-184 contacts substrate.

This sequence belongs to the type III pantothenate kinase family. Homodimer. It depends on NH4(+) as a cofactor. The cofactor is K(+).

The protein localises to the cytoplasm. It carries out the reaction (R)-pantothenate + ATP = (R)-4'-phosphopantothenate + ADP + H(+). The protein operates within cofactor biosynthesis; coenzyme A biosynthesis; CoA from (R)-pantothenate: step 1/5. Functionally, catalyzes the phosphorylation of pantothenate (Pan), the first step in CoA biosynthesis. The protein is Type III pantothenate kinase of Thermomicrobium roseum (strain ATCC 27502 / DSM 5159 / P-2).